Reading from the N-terminus, the 150-residue chain is D-aminoacyl-tRNA deacylase (150 aa).

Residues 136–137 carry the Gly-cisPro motif, important for rejection of L-amino acids motif; the sequence is GP.

Belongs to the DTD family. Homodimer.

The protein resides in the cytoplasm. The catalysed reaction is glycyl-tRNA(Ala) + H2O = tRNA(Ala) + glycine + H(+). The enzyme catalyses a D-aminoacyl-tRNA + H2O = a tRNA + a D-alpha-amino acid + H(+). An aminoacyl-tRNA editing enzyme that deacylates mischarged D-aminoacyl-tRNAs. Also deacylates mischarged glycyl-tRNA(Ala), protecting cells against glycine mischarging by AlaRS. Acts via tRNA-based rather than protein-based catalysis; rejects L-amino acids rather than detecting D-amino acids in the active site. By recycling D-aminoacyl-tRNA to D-amino acids and free tRNA molecules, this enzyme counteracts the toxicity associated with the formation of D-aminoacyl-tRNA entities in vivo and helps enforce protein L-homochirality. This chain is D-aminoacyl-tRNA deacylase, found in Staphylococcus carnosus (strain TM300).